A 152-amino-acid chain; its full sequence is Protein Turandot X (152 aa).

The N-terminal stretch at 1 to 22 (MGFYISSLLICVFLGIVRFASA) is a signal peptide.

This sequence belongs to the Turandot family.

The protein resides in the secreted. In terms of biological role, a humoral factor that may play a role in stress tolerance. In Drosophila erecta (Fruit fly), this protein is Protein Turandot X.